The primary structure comprises 250 residues: UDP-2,3-diacylglucosamine hydrolase (250 aa).

Mn(2+) contacts are provided by Asp-8, His-10, Asp-41, Asn-79, and His-114. 79–80 (NR) serves as a coordination point for substrate. Substrate is bound by residues Asp-122, Ser-160, Gln-167, and His-195. Mn(2+)-binding residues include His-195 and His-197.

It belongs to the LpxH family. Mn(2+) serves as cofactor.

Its subcellular location is the cell inner membrane. It carries out the reaction UDP-2-N,3-O-bis[(3R)-3-hydroxytetradecanoyl]-alpha-D-glucosamine + H2O = 2-N,3-O-bis[(3R)-3-hydroxytetradecanoyl]-alpha-D-glucosaminyl 1-phosphate + UMP + 2 H(+). It functions in the pathway glycolipid biosynthesis; lipid IV(A) biosynthesis; lipid IV(A) from (3R)-3-hydroxytetradecanoyl-[acyl-carrier-protein] and UDP-N-acetyl-alpha-D-glucosamine: step 4/6. Hydrolyzes the pyrophosphate bond of UDP-2,3-diacylglucosamine to yield 2,3-diacylglucosamine 1-phosphate (lipid X) and UMP by catalyzing the attack of water at the alpha-P atom. Involved in the biosynthesis of lipid A, a phosphorylated glycolipid that anchors the lipopolysaccharide to the outer membrane of the cell. In Nitrosococcus oceani (strain ATCC 19707 / BCRC 17464 / JCM 30415 / NCIMB 11848 / C-107), this protein is UDP-2,3-diacylglucosamine hydrolase.